The sequence spans 1954 residues: Protein GREB1 (1954 aa).

Disordered regions lie at residues 48-83 (LSSLEGGSRADNEEEEEDGEGGLEPSSPPNAYQLPP), 238-342 (LAAF…AKHE), and 1083-1235 (KGPK…GSSS). Acidic residues predominate over residues 59-68 (NEEEEEDGEG). Positions 292–303 (SSLSALPRPSAL) are enriched in low complexity. Basic and acidic residues-rich tracts occupy residues 1083–1099 (KGPKNEALESDGEKLSS) and 1122–1133 (GPVKRERSHSHD). Low complexity predominate over residues 1134–1146 (SASSSLSSRASGS). Residues 1187–1196 (RVSQGSTVIS) are compositionally biased toward polar residues. The segment covering 1224 to 1235 (SSQLSSSSGSSS) has biased composition (low complexity). A helical membrane pass occupies residues 1873–1893 (DMVFSGLLLYLCDSFVGASFL).

It belongs to the GREB1 family.

Its subcellular location is the membrane. Functionally, may play a role in estrogen-stimulated cell proliferation. The protein is Protein GREB1 (Greb1) of Mus musculus (Mouse).